Here is an 80-residue protein sequence, read N- to C-terminus: Cell division activator CedA (80 aa).

Belongs to the CedA family.

Functionally, activates the cell division inhibited by chromosomal DNA over-replication. This chain is Cell division activator CedA, found in Salmonella choleraesuis (strain SC-B67).